Consider the following 89-residue polypeptide: Small ribosomal subunit protein uS15 (89 aa).

The protein belongs to the universal ribosomal protein uS15 family. As to quaternary structure, part of the 30S ribosomal subunit. Forms a bridge to the 50S subunit in the 70S ribosome, contacting the 23S rRNA.

In terms of biological role, one of the primary rRNA binding proteins, it binds directly to 16S rRNA where it helps nucleate assembly of the platform of the 30S subunit by binding and bridging several RNA helices of the 16S rRNA. Its function is as follows. Forms an intersubunit bridge (bridge B4) with the 23S rRNA of the 50S subunit in the ribosome. This Geobacillus kaustophilus (strain HTA426) protein is Small ribosomal subunit protein uS15.